The sequence spans 309 residues: Dihydroorotate dehydrogenase B (NAD(+)), catalytic subunit (309 aa).

FMN-binding positions include Ser-21 and 45–46 (KA). Substrate is bound by residues Lys-45 and 69–73 (NAIGL). The FMN site is built by Asn-99 and Asn-127. Asn-127 contributes to the substrate binding site. Cys-130 functions as the Nucleophile in the catalytic mechanism. The FMN site is built by Lys-165 and Ile-191. Residue 192–193 (NT) participates in substrate binding. Residues Gly-217, 243–244 (GG), and 265–266 (GT) each bind FMN.

This sequence belongs to the dihydroorotate dehydrogenase family. Type 1 subfamily. Heterotetramer of 2 PyrK and 2 PyrD type B subunits. FMN is required as a cofactor.

It localises to the cytoplasm. It carries out the reaction (S)-dihydroorotate + NAD(+) = orotate + NADH + H(+). It functions in the pathway pyrimidine metabolism; UMP biosynthesis via de novo pathway; orotate from (S)-dihydroorotate (NAD(+) route): step 1/1. In terms of biological role, catalyzes the conversion of dihydroorotate to orotate with NAD(+) as electron acceptor. This chain is Dihydroorotate dehydrogenase B (NAD(+)), catalytic subunit (pyrD), found in Bacillus cytotoxicus (strain DSM 22905 / CIP 110041 / 391-98 / NVH 391-98).